Reading from the N-terminus, the 182-residue chain is ATP-dependent protease subunit HslV (182 aa).

The active site involves threonine 6. The Na(+) site is built by alanine 164, cysteine 167, and threonine 170.

The protein belongs to the peptidase T1B family. HslV subfamily. A double ring-shaped homohexamer of HslV is capped on each side by a ring-shaped HslU homohexamer. The assembly of the HslU/HslV complex is dependent on binding of ATP.

The protein resides in the cytoplasm. The enzyme catalyses ATP-dependent cleavage of peptide bonds with broad specificity.. Allosterically activated by HslU binding. In terms of biological role, protease subunit of a proteasome-like degradation complex believed to be a general protein degrading machinery. This is ATP-dependent protease subunit HslV from Borrelia garinii subsp. bavariensis (strain ATCC BAA-2496 / DSM 23469 / PBi) (Borreliella bavariensis).